The sequence spans 502 residues: Ubiquitin-associated protein 1 (502 aa).

The interaction with ESCRT-I stretch occupies residues 1–95 (MASKKLGADF…AEAKVNSKSG (95 aa)). One can recognise a UMA domain in the interval 17–63 (LDDVPFKTGDKFKTPAKVGLPIGFSLPDCLQVVREVQYDFSLEKKTI). Basic and acidic residues predominate over residues 86-100 (AEAKVNSKSGPEGDS). A disordered region spans residues 86–117 (AEAKVNSKSGPEGDSKMSFSKTHSTATMPPPI). A compositionally biased stretch (polar residues) spans 102–112 (MSFSKTHSTAT). Residues S146, S205, and S289 each carry the phosphoserine modification. The tract at residues 260-290 (VSNIKSLSFPKLDSDDSNQKTAKLASTFHST) is interaction with PTPN23. UBA domains are found at residues 389-430 (SPSE…LFAH) and 451-498 (QCSE…LMAR).

In terms of assembly, component of an ESCRT-I complex (endosomal sorting complex required for transport I) which consists of TSG101, VPS28, VPS37A and UBAP1 in a 1:1:1:1 stoichiometry. Interacts with PTPN23. Interacts (via UBA domains) with ubiquitinated proteins. Ubiquitous. Highly expressed in heart, brain, placenta, lung, liver, skeletal muscle and pancreas.

Its subcellular location is the cytoplasm. The protein localises to the cytosol. It localises to the endosome. Functionally, component of the ESCRT-I complex, a regulator of vesicular trafficking process. Binds to ubiquitinated cargo proteins and is required for the sorting of endocytic ubiquitinated cargos into multivesicular bodies (MVBs). Plays a role in the proteasomal degradation of ubiquitinated cell-surface proteins, such as EGFR and BST2. The sequence is that of Ubiquitin-associated protein 1 from Homo sapiens (Human).